Reading from the N-terminus, the 388-residue chain is MGIKNLTSLIEENAPSAIKSNDLKSYSGRIVAIDASTSMYQFLIAINTEMGAALMNANGETTSHLQGMFYRTIKLMTRGIKPIYVFDGKAPVLKSGELAKRYARRKEAEQQLEEANEVGNSEDVQKFQKRTISASRKQNEECKKLLELMGVPIVQAPCEAEAQCAELCKGGKAWATGSEDMDSLTLGTTILLRRLTFSEARKLPIMEIELEKVLDGLDLTHDQFVDLCILLGCDYCDTIKGIGPKKSFDMITKHKNIQTVIQNIDRTKNPIPESFPYEEVRELFKNPDVIKCQDLPEIVWKEPDVDGLIKYLVGEMGFNETRVQQGIEKLKKYKDTGVQTRIDTFFPMIKRPRDEDAGSAKKKQKTVAKPGAAGSKKKPAAKKAAGKK.

The N-domain stretch occupies residues 1–105 (MGIKNLTSLI…GELAKRYARR (105 aa)). Mg(2+) is bound at residue Asp-34. DNA is bound at residue Arg-71. Asp-87, Glu-159, Glu-161, Asp-180, and Asp-182 together coordinate Mg(2+). Residues 123–254 (DVQKFQKRTI…KKSFDMITKH (132 aa)) are I-domain. Residue Glu-159 participates in DNA binding. The DNA site is built by Gly-232 and Asp-234. Mg(2+) is bound at residue Asp-234. The interval 338 to 346 (VQTRIDTFF) is interaction with PCNA. The disordered stretch occupies residues 349–388 (IKRPRDEDAGSAKKKQKTVAKPGAAGSKKKPAAKKAAGKK). The span at 375–388 (SKKKPAAKKAAGKK) shows a compositional bias: basic residues.

Belongs to the XPG/RAD2 endonuclease family. FEN1 subfamily. As to quaternary structure, interacts with PCNA. Three molecules of repG bind to one PCNA trimer with each molecule binding to one PCNA monomer. PCNA stimulates the nuclease activity without altering cleavage specificity. Requires Mg(2+) as cofactor. Post-translationally, phosphorylated. Phosphorylation upon DNA damage induces relocalization to the nuclear plasma.

It localises to the nucleus. The protein localises to the nucleolus. It is found in the nucleoplasm. Its subcellular location is the mitochondrion. Its function is as follows. Structure-specific nuclease with 5'-flap endonuclease and 5'-3' exonuclease activities involved in DNA replication and repair. During DNA replication, cleaves the 5'-overhanging flap structure that is generated by displacement synthesis when DNA polymerase encounters the 5'-end of a downstream Okazaki fragment. It enters the flap from the 5'-end and then tracks to cleave the flap base, leaving a nick for ligation. Also involved in the long patch base excision repair (LP-BER) pathway, by cleaving within the apurinic/apyrimidinic (AP) site-terminated flap. Acts as a genome stabilization factor that prevents flaps from equilibrating into structures that lead to duplications and deletions. Also possesses 5'-3' exonuclease activity on nicked or gapped double-stranded DNA, and exhibits RNase H activity. Also involved in replication and repair of rDNA and in repairing mitochondrial DNA. The polypeptide is Flap endonuclease 1 (Heterostelium pallidum (strain ATCC 26659 / Pp 5 / PN500) (Cellular slime mold)).